We begin with the raw amino-acid sequence, 420 residues long: Glyceraldehyde-3-phosphate dehydrogenase GAPCP2, chloroplastic (420 aa).

The N-terminal 66 residues, 1 to 66, are a transit peptide targeting the chloroplast; sequence MALSSLLRSA…YNAKRVQPIK (66 aa). NAD(+)-binding positions include 94 to 95, Asp-116, and Arg-162; that span reads RI. D-glyceraldehyde 3-phosphate-binding positions include 233–235, Thr-264, 293–294, and Arg-316; these read SCT and TG. Cys-234 (nucleophile) is an active-site residue. Asn-398 is a binding site for NAD(+).

The protein belongs to the glyceraldehyde-3-phosphate dehydrogenase family. Homotetramer. In terms of tissue distribution, expressed in shoot and root vasculature, leaf veins and vascular tissue of flowers and siliques.

The protein localises to the plastid. It is found in the chloroplast stroma. The catalysed reaction is D-glyceraldehyde 3-phosphate + phosphate + NAD(+) = (2R)-3-phospho-glyceroyl phosphate + NADH + H(+). Its function is as follows. Involved in plastidial glycolytic pathway and plays a specific role in glycolytic energy production in non-green plastids and chloroplasts. Essential for breakdown of starch to form sucrose for export to non-photosynthetic tissues, and to generate primary metabolites for anabolic pathways such as fatty acid and amino acid synthesis. Plays an important role in plant development by providing substrates for the phosphorylated pathway of serine biosynthesis in roots. Plays a crucial role in pollen development. Functionally redundant with GAPCP1. This Arabidopsis thaliana (Mouse-ear cress) protein is Glyceraldehyde-3-phosphate dehydrogenase GAPCP2, chloroplastic (GAPCP2).